Here is a 233-residue protein sequence, read N- to C-terminus: Large ribosomal subunit protein uL1 (233 aa).

Belongs to the universal ribosomal protein uL1 family. Part of the 50S ribosomal subunit.

Its function is as follows. Binds directly to 23S rRNA. The L1 stalk is quite mobile in the ribosome, and is involved in E site tRNA release. In terms of biological role, protein L1 is also a translational repressor protein, it controls the translation of the L11 operon by binding to its mRNA. In Vibrio cholerae serotype O1 (strain ATCC 39315 / El Tor Inaba N16961), this protein is Large ribosomal subunit protein uL1.